A 313-amino-acid polypeptide reads, in one-letter code: Putative adhesin P1-like protein MPN_202 (313 aa).

The segment covering 1 to 16 (MGSQNQGSTTTTSAGN) has biased composition (low complexity). The segment at 1–44 (MGSQNQGSTTTTSAGNPDSLVTDKVDQKGQVQTSGQNLSDTNYT) is disordered. Residues 29 to 44 (GQVQTSGQNLSDTNYT) show a composition bias toward polar residues.

Belongs to the adhesin P1 family.

This Mycoplasma pneumoniae (strain ATCC 29342 / M129 / Subtype 1) (Mycoplasmoides pneumoniae) protein is Putative adhesin P1-like protein MPN_202.